The chain runs to 113 residues: U11-theraphotoxin-Hhn1e (113 aa).

Positions 1 to 21 are cleaved as a signal peptide; sequence MNTVRVTFLLVFVLAVSLGQA. Residues 22–74 constitute a propeptide that is removed on maturation; that stretch reads DKDENRMEMLEKTEQGKSYLDFAENLLLQKLEELEARLLEEDSEESRNSRQKR. Residues 60–69 show a composition bias toward basic and acidic residues; that stretch reads LEEDSEESRN. The tract at residues 60–87 is disordered; that stretch reads LEEDSEESRNSRQKRCIGEGVPRDENDP. Disulfide bonds link C75/C90 and C89/C110.

It belongs to the neurotoxin 14 (magi-1) family. 01 (HNTX-16) subfamily. In terms of tissue distribution, expressed by the venom gland.

The protein resides in the secreted. Its function is as follows. Probable ion channel inhibitor. In Cyriopagopus hainanus (Chinese bird spider), this protein is U11-theraphotoxin-Hhn1e.